Here is a 383-residue protein sequence, read N- to C-terminus: RNA-binding motif, single-stranded-interacting protein 2 (383 aa).

M1 carries the N-acetylmethionine modification. The segment at 28–56 (QMAPPSPRNSTPNSSGGGGGGSGGNDQLS) is disordered. Positions 42–51 (SGGGGGGSGG) are enriched in gly residues. 2 consecutive RRM domains span residues 58–131 (TNLY…MAKQ) and 137–222 (TNLY…FADG). At S108 the chain carries Phosphoserine. S287 is subject to Phosphoserine. Positions 352–383 (SSVSAEESNGQQNQLAVEPPSDHGVYPFQFSK) are disordered.

The protein localises to the nucleus. The protein is RNA-binding motif, single-stranded-interacting protein 2 (Rbms2) of Mus musculus (Mouse).